The sequence spans 235 residues: MTINLDKIKIPDDWKQLLASEFLSPYFADIKTHYLNALQNKEMIYPKPHQIFAAFNLTPLSSLKVVILGQDPYHGSGIIEGVETPQAMGLSFSVPRGMPIPPSLKNIYAELSQSLHITPPTHGDLSGWARQGVLLLNAILSVRANAPASHKHFGWEYFSDGVIRALSAHKEHLVFMLWGNYAKKKAPLIDASKHKIITAPHPSPLARGFVGSNVFLQANIYLQEHAKEPIAWEKL.

Aspartate 71 (proton acceptor) is an active-site residue.

Belongs to the uracil-DNA glycosylase (UDG) superfamily. UNG family.

It is found in the cytoplasm. The enzyme catalyses Hydrolyzes single-stranded DNA or mismatched double-stranded DNA and polynucleotides, releasing free uracil.. Excises uracil residues from the DNA which can arise as a result of misincorporation of dUMP residues by DNA polymerase or due to deamination of cytosine. The protein is Uracil-DNA glycosylase of Helicobacter hepaticus (strain ATCC 51449 / 3B1).